A 353-amino-acid polypeptide reads, in one-letter code: tRNA-specific 2-thiouridylase MnmA 2 (353 aa).

Position 6-13 (6-13 (LLSGGVDS)) interacts with ATP. The tract at residues 92–94 (NPD) is interaction with target base in tRNA. Cysteine 97 serves as the catalytic Nucleophile. An intrachain disulfide couples cysteine 97 to cysteine 192. Position 120 (glycine 120) interacts with ATP. The tract at residues 142–144 (KDQ) is interaction with tRNA. Cysteine 192 serves as the catalytic Cysteine persulfide intermediate.

Belongs to the MnmA/TRMU family.

The protein localises to the cytoplasm. It catalyses the reaction S-sulfanyl-L-cysteinyl-[protein] + uridine(34) in tRNA + AH2 + ATP = 2-thiouridine(34) in tRNA + L-cysteinyl-[protein] + A + AMP + diphosphate + H(+). Functionally, catalyzes the 2-thiolation of uridine at the wobble position (U34) of tRNA, leading to the formation of s(2)U34. The sequence is that of tRNA-specific 2-thiouridylase MnmA 2 from Bacteroides fragilis (strain YCH46).